Reading from the N-terminus, the 450-residue chain is UDP-N-acetylmuramoylalanine--D-glutamate ligase (450 aa).

116 to 122 contributes to the ATP binding site; the sequence is GSNGKTT.

The protein belongs to the MurCDEF family.

It is found in the cytoplasm. The enzyme catalyses UDP-N-acetyl-alpha-D-muramoyl-L-alanine + D-glutamate + ATP = UDP-N-acetyl-alpha-D-muramoyl-L-alanyl-D-glutamate + ADP + phosphate + H(+). It functions in the pathway cell wall biogenesis; peptidoglycan biosynthesis. Its function is as follows. Cell wall formation. Catalyzes the addition of glutamate to the nucleotide precursor UDP-N-acetylmuramoyl-L-alanine (UMA). This is UDP-N-acetylmuramoylalanine--D-glutamate ligase from Dechloromonas aromatica (strain RCB).